Here is a 142-residue protein sequence, read N- to C-terminus: Hemoglobin subunit zeta (142 aa).

Residue S2 is modified to N-acetylserine. Residues 2 to 142 form the Globin domain; the sequence is SLTRTERTII…VSGVLTEKYR (141 aa). The residue at position 29 (T29) is a Phosphothreonine. Phosphoserine is present on S53. Heme b is bound at residue H59. Residues S73 and S82 each carry the phosphoserine modification. Position 88 (H88) interacts with heme b.

Belongs to the globin family. Heterotetramer of two zeta chains and beta-type chains.

The zeta chain is an alpha-type chain of mammalian embryonic hemoglobin. In Capra hircus (Goat), this protein is Hemoglobin subunit zeta (HBZ1).